A 965-amino-acid chain; its full sequence is Sarcosine oxidase subunit alpha (965 aa).

Residues Ala139, Asp158, Glu159, Arg160, Thr166, Val205, Ala418, Leu423, and Thr425 each contribute to the NAD(+) site. (6R)-5,10-methylene-5,6,7,8-tetrahydrofolate is bound by residues Thr692 and Glu784.

Belongs to the GcvT family. In terms of assembly, heterotetramer composed of subunits alpha (SoxA), beta (SoxB), gamma (SoxG) and delta (SoxD). NAD(+) is required as a cofactor.

Its subcellular location is the cytoplasm. The enzyme catalyses sarcosine + (6S)-5,6,7,8-tetrahydrofolate + O2 = (6R)-5,10-methylene-5,6,7,8-tetrahydrofolate + glycine + H2O2. The catalysed reaction is sarcosine + O2 + H2O = formaldehyde + glycine + H2O2. With respect to regulation, inhibited by Zn(2+), Cu(2+), Cd(2+), Hg(2+), Ag(+), p-chloromercuribenzoate (p-CMB), iodoacetamide, N-ethylmaleimide, CN(-), o-phenanthroline and sodium lauryl sulfate. Its function is as follows. In the presence of tetrahydrofolate, catalyzes the oxidative demethylation of sarcosine to yield glycine, 5,10-methylenetetrahydrofolate and hydrogen peroxide. In the absence of tetrahydrofolate, catalyzes the oxidative demethylation of sarcosine to yield glycine, formaldehyde and hydrogen peroxide. Can also use N-methyl-L-alanine and N-ethyl-L-glycine. Is very specific for oxygen as an acceptor. The polypeptide is Sarcosine oxidase subunit alpha (Corynebacterium sp. (strain U-96)).